Reading from the N-terminus, the 379-residue chain is Succinyl-diaminopimelate desuccinylase (379 aa).

Histidine 68 contacts Zn(2+). Aspartate 70 is a catalytic residue. Aspartate 101 provides a ligand contact to Zn(2+). Glutamate 135 functions as the Proton acceptor in the catalytic mechanism. Zn(2+)-binding residues include glutamate 136, glutamate 164, and histidine 350.

This sequence belongs to the peptidase M20A family. DapE subfamily. Homodimer. It depends on Zn(2+) as a cofactor. Requires Co(2+) as cofactor.

It catalyses the reaction N-succinyl-(2S,6S)-2,6-diaminopimelate + H2O = (2S,6S)-2,6-diaminopimelate + succinate. Its pathway is amino-acid biosynthesis; L-lysine biosynthesis via DAP pathway; LL-2,6-diaminopimelate from (S)-tetrahydrodipicolinate (succinylase route): step 3/3. Its function is as follows. Catalyzes the hydrolysis of N-succinyl-L,L-diaminopimelic acid (SDAP), forming succinate and LL-2,6-diaminopimelate (DAP), an intermediate involved in the bacterial biosynthesis of lysine and meso-diaminopimelic acid, an essential component of bacterial cell walls. This is Succinyl-diaminopimelate desuccinylase from Bordetella bronchiseptica (strain ATCC BAA-588 / NCTC 13252 / RB50) (Alcaligenes bronchisepticus).